The sequence spans 654 residues: Probable Xaa-Pro aminopeptidase P (654 aa).

Mn(2+) contacts are provided by Asp-449, Asp-460, Glu-558, and Glu-572.

This sequence belongs to the peptidase M24B family. Mn(2+) serves as cofactor.

The enzyme catalyses Release of any N-terminal amino acid, including proline, that is linked to proline, even from a dipeptide or tripeptide.. In terms of biological role, catalyzes the removal of a penultimate prolyl residue from the N-termini of peptides. The polypeptide is Probable Xaa-Pro aminopeptidase P (ampp) (Aspergillus fumigatus (strain CBS 144.89 / FGSC A1163 / CEA10) (Neosartorya fumigata)).